The following is a 324-amino-acid chain: Glyoxylate/hydroxypyruvate reductase B (324 aa).

Residues Arg-237 and Glu-266 contribute to the active site. His-285 functions as the Proton donor in the catalytic mechanism.

Belongs to the D-isomer specific 2-hydroxyacid dehydrogenase family. GhrB subfamily. In terms of assembly, homodimer.

Its subcellular location is the cytoplasm. It carries out the reaction glycolate + NADP(+) = glyoxylate + NADPH + H(+). It catalyses the reaction (R)-glycerate + NAD(+) = 3-hydroxypyruvate + NADH + H(+). The catalysed reaction is (R)-glycerate + NADP(+) = 3-hydroxypyruvate + NADPH + H(+). Catalyzes the NADPH-dependent reduction of glyoxylate and hydroxypyruvate into glycolate and glycerate, respectively. In Escherichia coli O17:K52:H18 (strain UMN026 / ExPEC), this protein is Glyoxylate/hydroxypyruvate reductase B.